Consider the following 520-residue polypeptide: Amine oxidase [flavin-containing] B (520 aa).

N-acetylserine is present on Ser2. Residues 2 to 489 (SNKCDVIVVG…TFLERHLPSV (488 aa)) are Cytoplasmic-facing. Residue Lys52 is modified to N6-acetyllysine. Cys397 carries the S-8alpha-FAD cysteine modification. The chain crosses the membrane as a helical; Anchor for type IV membrane protein span at residues 490–516 (PGLLKLLGLTTILSATALGFLAHKKGL). At 517–520 (FVRF) the chain is on the mitochondrial intermembrane side.

This sequence belongs to the flavin monoamine oxidase family. Monomer, homo- or heterodimer (containing two subunits of similar size). Each subunit contains a covalently bound flavin. Enzymatically active as monomer. It depends on FAD as a cofactor.

Its subcellular location is the mitochondrion outer membrane. It catalyses the reaction a secondary aliphatic amine + O2 + H2O = a primary amine + an aldehyde + H2O2. The catalysed reaction is (R)-adrenaline + O2 + H2O = (R)-3,4-dihydroxymandelaldehyde + methylamine + H2O2. The enzyme catalyses a primary methyl amine + O2 + H2O = an aldehyde + H2O2 + NH4(+). It carries out the reaction dopamine + O2 + H2O = 3,4-dihydroxyphenylacetaldehyde + H2O2 + NH4(+). It catalyses the reaction tyramine + O2 + H2O = (4-hydroxyphenyl)acetaldehyde + H2O2 + NH4(+). The catalysed reaction is (R)-noradrenaline + O2 + H2O = (R)-3,4-dihydroxymandelaldehyde + H2O2 + NH4(+). The enzyme catalyses benzylamine + O2 + H2O = benzaldehyde + H2O2 + NH4(+). It carries out the reaction 2-phenylethylamine + O2 + H2O = 2-phenylacetaldehyde + H2O2 + NH4(+). It catalyses the reaction N-acetylputrescine + O2 + H2O = 4-acetamidobutanal + H2O2 + NH4(+). Catalyzes the oxidative deamination of primary and some secondary amines such as neurotransmitters, and exogenous amines including the tertiary amine, neurotoxin 1-methyl-4-phenyl-1,2,3,6-tetrahydropyridine (MPTP), with concomitant reduction of oxygen to hydrogen peroxide and participates in the metabolism of neuroactive and vasoactive amines in the central nervous system and peripheral tissues. Preferentially degrades benzylamine and phenylethylamine. The polypeptide is Amine oxidase [flavin-containing] B (Rattus norvegicus (Rat)).